The sequence spans 467 residues: SVGFKAGVKEYKLTYYTPEYETKDTDILAAFRVSPQPGVPPEEAGAAVAAESSTGTWTTVWTDGLTSLDRYKGRCYHIDPVPGEEDQYICYVAYPLDLFEEGSVTNMFTSIVGNVFGFKALRALRLEDLRIPPAYVKTFQGPPHGIQVERDKLNKYGRPLLGCTIKPKLGLSAKNYGRAVYECLRGGLDFTKDDENVNSQPFMRWRDRFLFCAEAIYKSQAETGEIKGHYLNATAGNXEEMIKRAVFARELGVPIVMHDYLTGGFTANTSLASYCRDNGLLLHIHRAMHAVIDRQKNHGIHFRVLAKALRMSGGDHIHSGTVVGKLEGERNITLGFVDLLRDDYIEKDRSRGIFFTQDWVSLPGVLPVASGGIHVWHMRALVEIFGDDSVLQFGGGTLGHPWGNAPGAVANRVSLEACVQARNEGRDLAREGNEIVREACKWSPELAAACEVWKEIKFEFKEVDTLD.

K5 carries the N6,N6,N6-trimethyllysine modification. The substrate site is built by N114 and T164. Catalysis depends on K166, which acts as the Proton acceptor. Residue K168 coordinates substrate. Mg(2+) contacts are provided by K192, D194, and E195. K192 carries the post-translational modification N6-carboxylysine. The Proton acceptor role is filled by H285. 3 residues coordinate substrate: R286, H318, and S370.

The protein belongs to the RuBisCO large chain family. Type I subfamily. As to quaternary structure, heterohexadecamer of 8 large chains and 8 small chains; disulfide-linked. The disulfide link is formed within the large subunit homodimers. Mg(2+) serves as cofactor. The disulfide bond which can form in the large chain dimeric partners within the hexadecamer appears to be associated with oxidative stress and protein turnover.

The protein localises to the plastid. It localises to the chloroplast. The enzyme catalyses 2 (2R)-3-phosphoglycerate + 2 H(+) = D-ribulose 1,5-bisphosphate + CO2 + H2O. The catalysed reaction is D-ribulose 1,5-bisphosphate + O2 = 2-phosphoglycolate + (2R)-3-phosphoglycerate + 2 H(+). Functionally, ruBisCO catalyzes two reactions: the carboxylation of D-ribulose 1,5-bisphosphate, the primary event in carbon dioxide fixation, as well as the oxidative fragmentation of the pentose substrate in the photorespiration process. Both reactions occur simultaneously and in competition at the same active site. This chain is Ribulose bisphosphate carboxylase large chain, found in Eriodictyon californicum (California yerba santa).